We begin with the raw amino-acid sequence, 437 residues long: Glutamyl-tRNA reductase (437 aa).

Residues 49–52, serine 109, 114–116, and glutamine 120 each bind substrate; these read TCNR and EVQ. Cysteine 50 acts as the Nucleophile in catalysis. 189–194 contributes to the NADP(+) binding site; the sequence is GAGDTA.

The protein belongs to the glutamyl-tRNA reductase family. In terms of assembly, homodimer.

The enzyme catalyses (S)-4-amino-5-oxopentanoate + tRNA(Glu) + NADP(+) = L-glutamyl-tRNA(Glu) + NADPH + H(+). It participates in porphyrin-containing compound metabolism; protoporphyrin-IX biosynthesis; 5-aminolevulinate from L-glutamyl-tRNA(Glu): step 1/2. Its pathway is porphyrin-containing compound metabolism; chlorophyll biosynthesis. Its function is as follows. Catalyzes the NADPH-dependent reduction of glutamyl-tRNA(Glu) to glutamate 1-semialdehyde (GSA). The sequence is that of Glutamyl-tRNA reductase from Chloroherpeton thalassium (strain ATCC 35110 / GB-78).